A 216-amino-acid chain; its full sequence is MAQIIDLVPWDECSAHLYASPAVLLPLERVRHPLAGVKHQLYHPALPSLRRMDMDTVKGCLSDEHCQSSTYFSKDDFNKAHFTLLGVPNKPLQCLDFTATGQKLCHKYRGGKMIPIAPGINRVDWPCFTRAIEDWSKFVSRSEEFKLPCANKRVEGFSGYAVRYLKPEVTQNWRYCLNQNPSLDRYGQKPLPFDSLNAFRRFGSHYSRINYLTPWH.

Microtubule inner protein component of sperm flagellar doublet microtubules. Expressed in testis.

The protein resides in the cytoplasm. Its subcellular location is the cytoskeleton. The protein localises to the flagellum axoneme. Functionally, microtubule inner protein (MIP) part of the dynein-decorated doublet microtubules (DMTs) in flagellum axoneme. May serve to reinforce and thus stabilize the microtubule structure in the sperm flagella. This Mus musculus (Mouse) protein is Sperm microtubule inner protein 8 (Spmip8).